A 346-amino-acid chain; its full sequence is tRNA N6-adenosine threonylcarbamoyltransferase (346 aa).

Histidine 111 and histidine 115 together coordinate Fe cation. Residues 134–138 (LVSGG), aspartate 167, glycine 180, and asparagine 279 each bind substrate. Aspartate 307 provides a ligand contact to Fe cation.

The protein belongs to the KAE1 / TsaD family. It depends on Fe(2+) as a cofactor.

Its subcellular location is the cytoplasm. It catalyses the reaction L-threonylcarbamoyladenylate + adenosine(37) in tRNA = N(6)-L-threonylcarbamoyladenosine(37) in tRNA + AMP + H(+). Required for the formation of a threonylcarbamoyl group on adenosine at position 37 (t(6)A37) in tRNAs that read codons beginning with adenine. Is involved in the transfer of the threonylcarbamoyl moiety of threonylcarbamoyl-AMP (TC-AMP) to the N6 group of A37, together with TsaE and TsaB. TsaD likely plays a direct catalytic role in this reaction. The sequence is that of tRNA N6-adenosine threonylcarbamoyltransferase from Burkholderia thailandensis (strain ATCC 700388 / DSM 13276 / CCUG 48851 / CIP 106301 / E264).